The primary structure comprises 168 residues: 2-C-methyl-D-erythritol 2,4-cyclodiphosphate synthase (168 aa).

2 residues coordinate a divalent metal cation: D13 and H15. 4-CDP-2-C-methyl-D-erythritol 2-phosphate is bound by residues 13-15 (DVH) and 39-40 (HS). A divalent metal cation is bound at residue H47. 4-CDP-2-C-methyl-D-erythritol 2-phosphate-binding positions include 61-63 (DIG), 66-70 (FPDTD), F144, and R147.

Belongs to the IspF family. Homotrimer. The cofactor is a divalent metal cation.

The catalysed reaction is 4-CDP-2-C-methyl-D-erythritol 2-phosphate = 2-C-methyl-D-erythritol 2,4-cyclic diphosphate + CMP. It functions in the pathway isoprenoid biosynthesis; isopentenyl diphosphate biosynthesis via DXP pathway; isopentenyl diphosphate from 1-deoxy-D-xylulose 5-phosphate: step 4/6. In terms of biological role, involved in the biosynthesis of isopentenyl diphosphate (IPP) and dimethylallyl diphosphate (DMAPP), two major building blocks of isoprenoid compounds. Catalyzes the conversion of 4-diphosphocytidyl-2-C-methyl-D-erythritol 2-phosphate (CDP-ME2P) to 2-C-methyl-D-erythritol 2,4-cyclodiphosphate (ME-CPP) with a corresponding release of cytidine 5-monophosphate (CMP). The chain is 2-C-methyl-D-erythritol 2,4-cyclodiphosphate synthase from Ralstonia nicotianae (strain ATCC BAA-1114 / GMI1000) (Ralstonia solanacearum).